A 349-amino-acid polypeptide reads, in one-letter code: Small ribosomal subunit biogenesis GTPase RsgA (349 aa).

Basic residues predominate over residues Met-1–Gln-11. Residues Met-1–Val-29 are disordered. In terms of domain architecture, CP-type G spans His-102 to Phe-272. GTP-binding positions include Asn-158–Asp-161 and Gly-212–Ser-220. The Zn(2+) site is built by Cys-296, Cys-301, His-303, and Cys-309.

This sequence belongs to the TRAFAC class YlqF/YawG GTPase family. RsgA subfamily. Monomer. Associates with 30S ribosomal subunit, binds 16S rRNA. Requires Zn(2+) as cofactor.

Its subcellular location is the cytoplasm. Functionally, one of several proteins that assist in the late maturation steps of the functional core of the 30S ribosomal subunit. Helps release RbfA from mature subunits. May play a role in the assembly of ribosomal proteins into the subunit. Circularly permuted GTPase that catalyzes slow GTP hydrolysis, GTPase activity is stimulated by the 30S ribosomal subunit. In Pectobacterium atrosepticum (strain SCRI 1043 / ATCC BAA-672) (Erwinia carotovora subsp. atroseptica), this protein is Small ribosomal subunit biogenesis GTPase RsgA.